The chain runs to 293 residues: UPF0282 protein MK0213 (293 aa).

It belongs to the UPF0282 family.

The polypeptide is UPF0282 protein MK0213 (Methanopyrus kandleri (strain AV19 / DSM 6324 / JCM 9639 / NBRC 100938)).